Consider the following 462-residue polypeptide: Aquaporin-1 (462 aa).

Positions 1-11 (MTMRSPLTNDH) are enriched in polar residues. The tract at residues 1 to 24 (MTMRSPLTNDHPQPLRASPLSEHD) is disordered. At 1 to 146 (MTMRSPLTND…KWMNSDWKNH (146 aa)) the chain is on the cytoplasmic side. A helical transmembrane segment spans residues 147–167 (IVAVIGELIGTSLFLFFGYAG). Over 168–182 (IEVAKLQGREPPDLE) the chain is Extracellular. A helical membrane pass occupies residues 183–203 (VLFYISATFGASLMVTAWIFF). Residues 204–229 (RISGGLFNPAVTLALAILKAVSPIRA) are Cytoplasmic-facing. An NPA 1 motif is present at residues 211-213 (NPA). The chain crosses the membrane as a helical span at residues 230–250 (FLLVITQLGASCLAAILVQEI). Topologically, residues 251 to 269 (FPKQLDVATTLGSGTSMGQ) are extracellular. A helical transmembrane segment spans residues 270–290 (GFVIEAITTAALIFTIIMLAV). The Cytoplasmic segment spans residues 291 to 296 (EKHKAT). A helical transmembrane segment spans residues 297–317 (FVAPIGIGLALFVAHMVAVPF). Residues 318–341 (TGASLNPARSFGPSAIVWNFPREH) are Extracellular-facing. The NPA 2 signature appears at 323-325 (NPA). Residues 342–362 (WIYWVGPILGAGLAVLFFRLI) form a helical membrane-spanning segment. The Cytoplasmic portion of the chain corresponds to 363–462 (KLMEYEMANP…WRRQQYRNVV (100 aa)). Residues 407–433 (GKSWYRDDSSSGSMRRKESVNSFTGGR) are disordered. A compositionally biased stretch (basic and acidic residues) spans 410 to 425 (WYRDDSSSGSMRRKES).

The protein belongs to the MIP/aquaporin (TC 1.A.8) family.

It is found in the membrane. The catalysed reaction is H2O(in) = H2O(out). Its function is as follows. Water channel required to facilitate the transport of water across membranes. Involved in conidiation. The sequence is that of Aquaporin-1 from Botryotinia fuckeliana (strain B05.10) (Noble rot fungus).